A 900-amino-acid polypeptide reads, in one-letter code: Formin-like protein 5 (900 aa).

The helical; Signal-anchor transmembrane segment at Ser15–Leu32 threads the bilayer. Positions Arg136–Asp209 are disordered. Positions Pro160 to Arg173 are enriched in pro residues. A helical transmembrane segment spans residues Ile214–Leu234. 2 disordered regions span residues Ser273 to Lys440 and Ala849 to Asp900. Residues His281–Ser304 are compositionally biased toward polar residues. Over residues Leu307–Leu316 the composition is skewed to basic and acidic residues. The span at Phe359–Ser368 shows a compositional bias: low complexity. Residues Ala369–Gly429 are compositionally biased toward pro residues. The 433-residue stretch at Ala433–Ser865 folds into the FH2 domain. The span at Gln860–Ser876 shows a compositional bias: polar residues.

It belongs to the formin-like family. Class-I subfamily. Expressed in the endosperm. Localizes to the cell plate, a plant-specific membranous component that is assembled at the plane of cell division.

The protein resides in the membrane. Might be involved in the organization and polarity of the actin cytoskeleton. Interacts with the barbed end of actin filaments and nucleates actin-filament polymerization in vitro. Seems to play a role in cytokinesis. This Arabidopsis thaliana (Mouse-ear cress) protein is Formin-like protein 5 (FH5).